An 806-amino-acid chain; its full sequence is Leucine--tRNA ligase (806 aa).

The short motif at 38 to 48 (PYPSGEIHMGH) is the 'HIGH' region element. Positions 572 to 576 (KMSKS) match the 'KMSKS' region motif. Residue Lys575 coordinates ATP.

The protein belongs to the class-I aminoacyl-tRNA synthetase family.

The protein localises to the cytoplasm. It catalyses the reaction tRNA(Leu) + L-leucine + ATP = L-leucyl-tRNA(Leu) + AMP + diphosphate. This chain is Leucine--tRNA ligase, found in Helicobacter pylori (strain ATCC 700392 / 26695) (Campylobacter pylori).